The primary structure comprises 599 residues: Elongation factor 4 (599 aa).

Residues 5-187 (SHIRNFSIIA…VLIKSVPAPV (183 aa)) enclose the tr-type G domain. Residues 17-22 (DHGKST) and 134-137 (NKID) contribute to the GTP site.

Belongs to the TRAFAC class translation factor GTPase superfamily. Classic translation factor GTPase family. LepA subfamily.

The protein localises to the cell inner membrane. The enzyme catalyses GTP + H2O = GDP + phosphate + H(+). Its function is as follows. Required for accurate and efficient protein synthesis under certain stress conditions. May act as a fidelity factor of the translation reaction, by catalyzing a one-codon backward translocation of tRNAs on improperly translocated ribosomes. Back-translocation proceeds from a post-translocation (POST) complex to a pre-translocation (PRE) complex, thus giving elongation factor G a second chance to translocate the tRNAs correctly. Binds to ribosomes in a GTP-dependent manner. The chain is Elongation factor 4 from Saccharophagus degradans (strain 2-40 / ATCC 43961 / DSM 17024).